The following is a 624-amino-acid chain: Actin-related protein 8 (624 aa).

Met-1 bears the N-acetylmethionine mark. A compositionally biased stretch (basic and acidic residues) spans 1–25 (MTQAEKGDTENGKEKGGEKEKEQRG). The segment at 1–29 (MTQAEKGDTENGKEKGGEKEKEQRGVKRP) is disordered. Positions 55 and 56 each coordinate ATP. Phosphoserine is present on Ser-132. Residue 283 to 286 (DVGD) participates in ATP binding. Position 412 is a phosphoserine (Ser-412). The disordered stretch occupies residues 430–462 (SKQEQSAKATADRKSASKPIGFEGDLRGQSSDL).

This sequence belongs to the actin family. ARP8 subfamily. As to quaternary structure, component of the chromatin remodeling INO80 complex; specifically part of a complex module associated with the DBINO domain of INO80. Interacts with ACTR5; the interaction is observed in asynchronous (interphase) cells but not in metaphase-arrested cells indicative for a possible dissociation of the INO80 complex in mitotic cells. Exists as monomers and dimers, but the dimer is most probably the biologically relevant form required for stable interactions with histones that exploits the twofold symmetry of the nucleosome core.

Its subcellular location is the nucleus. It localises to the chromosome. Plays an important role in the functional organization of mitotic chromosomes. Exhibits low basal ATPase activity, and unable to polymerize. In terms of biological role, proposed core component of the chromatin remodeling INO80 complex which is involved in transcriptional regulation, DNA replication and probably DNA repair. Required for the recruitment of INO80 (and probably the INO80 complex) to sites of DNA damage. Strongly prefer nucleosomes and H3-H4 tetramers over H2A-H2B dimers, suggesting it may act as a nucleosome recognition module within the complex. This chain is Actin-related protein 8 (ACTR8), found in Homo sapiens (Human).